The chain runs to 117 residues: MDNKAARLRRATRARKQIKELGANRLVVHRTPRHIYAQLIAPNGSEVLAAASTAEKSVREGLKSTGNVDAAKVVGKTIAERAIEKGVKNVSFDRSGFKYHGRVAALADAAREAGLQF.

It belongs to the universal ribosomal protein uL18 family. In terms of assembly, part of the 50S ribosomal subunit; part of the 5S rRNA/L5/L18/L25 subcomplex. Contacts the 5S and 23S rRNAs.

Functionally, this is one of the proteins that bind and probably mediate the attachment of the 5S RNA into the large ribosomal subunit, where it forms part of the central protuberance. The polypeptide is Large ribosomal subunit protein uL18 (Idiomarina loihiensis (strain ATCC BAA-735 / DSM 15497 / L2-TR)).